A 95-amino-acid chain; its full sequence is Co-chaperonin GroES (95 aa).

It belongs to the GroES chaperonin family. As to quaternary structure, heptamer of 7 subunits arranged in a ring. Interacts with the chaperonin GroEL.

The protein localises to the cytoplasm. Together with the chaperonin GroEL, plays an essential role in assisting protein folding. The GroEL-GroES system forms a nano-cage that allows encapsulation of the non-native substrate proteins and provides a physical environment optimized to promote and accelerate protein folding. GroES binds to the apical surface of the GroEL ring, thereby capping the opening of the GroEL channel. This is Co-chaperonin GroES from Chlorobium luteolum (strain DSM 273 / BCRC 81028 / 2530) (Pelodictyon luteolum).